Reading from the N-terminus, the 426-residue chain is Potassium channel subfamily K member 2 (426 aa).

The Cytoplasmic segment spans residues 1–61 (MLPSASRERP…TTINVMKWKT (61 aa)). Important for GNG4 binding and L-glutamate release in astrocytes regions lie at residues 17-38 (AAPD…LSFS) and 51-61 (DTTINVMKWKT). The chain crosses the membrane as a helical span at residues 62-82 (VSTIFLVVVLYLIIGATVFKA). Residues Asn110 and Asn134 are each glycosylated (N-linked (GlcNAc...) asparagine). Residues 144–170 (LGSSFFFAGTVITTIGFGNISPRTEGG) constitute an intramembrane region (pore-forming). Residues Thr157, Ile158, Gly159, and Phe160 each coordinate K(+). Residues 157-162 (TIGFGN) are selectivity filter 1. A helical membrane pass occupies residues 172 to 192 (IFCIIYALLGIPLFGFLLAGV). At 193-223 (GDQLGTIFGKGIAKVEDTFIKWNVSQTKIRI) the chain is on the cytoplasmic side. The chain crosses the membrane as a helical span at residues 224–244 (ISTIIFILFGCVLFVALPAII). The segment at residues 253 to 283 (ALDAIYFVVITLTTIGFGDYVAGGSDIEYLD) is an intramembrane region (pore-forming). K(+) contacts are provided by Thr266, Ile267, Gly268, and Phe269. Positions 266–271 (TIGFGD) are selectivity filter 2. The chain crosses the membrane as a helical span at residues 288–308 (VVWFWILVGLAYFAAVLSMIG). Over 309–426 (DWLRVISKKT…EEIAVIENIK (118 aa)) the chain is Cytoplasmic. The interval 313–326 (VISKKTKEEVGEFR) is interaction with AKAP5. Residues 337–385 (TAEFKETRRRLSVEIYDKFQRATSIKRKLSAELAGNHNQELTPCRRTLS) are essential for chloroform and halothane sensitivity. The residue at position 348 (Ser348) is a Phosphoserine; by PKA.

The protein belongs to the two pore domain potassium channel (TC 1.A.1.8) family. In terms of assembly, homodimer; disulfide-linked. Forms heterodimers with other 2-pore domain K(+) channel subunits, such as KCNK1, KCNK4, KCNK10 and KCNK18. Interacts with AKAP5; the channel is recruited to postsynaptic microdomains by AKAP5 where it can integrate neurotransmitter receptor signals. Part of a complex composed of AKAP5 and ADRB2. Upon AKAP5 binding, the channel is no longer sensitive to intracellular acidification, membrane stretch or arachidonic acid stimuli. Interacts with POPDC1; the interaction enhances KCNK2 surface expression and is inhibited by cAMP. Interacts (via N-terminus) with G-protein subunit GNG4 (via C-terminus); this interaction confers ion selectivity to L-glutamate and Cl(-) anions. In terms of processing, phosphorylation at Ser-348 controls the reversible conversion from a leak channel to a voltage-dependent channel. Detected in kidney, adrenal gland and brain where it is preferentially expressed in the amygdala but not found in thalamus, hypothalamus, hippocampus or substantia nigra.

The protein localises to the cell membrane. It is found in the endoplasmic reticulum membrane. It localises to the cell projection. The protein resides in the axon. Its subcellular location is the dendrite. The protein localises to the postsynaptic density membrane. It is found in the sarcolemma. It carries out the reaction K(+)(in) = K(+)(out). The catalysed reaction is L-glutamate(out) = L-glutamate(in). It catalyses the reaction chloride(in) = chloride(out). The enzyme catalyses Rb(+)(in) = Rb(+)(out). It carries out the reaction Cs(+)(in) = Cs(+)(out). Activated by various stimuli including intracellular acidic pH, mechanical stretch and polyunsaturated fatty acids such as arachidonic acid. Activated by volatile anesthetics such as chloroform, halothane, and isoflurane. Its function is as follows. K(+) channel that conducts voltage-dependent outward rectifying currents upon membrane depolarization. Voltage sensing is coupled to K(+) electrochemical gradient in an 'ion flux gating' mode where outward but not inward ion flow opens the gate. Converts to voltage-independent 'leak' conductance mode upon stimulation by various stimuli including mechanical membrane stretch, acidic pH, heat and lipids. Reversibly converts between a voltage-insensitive K(+) 'leak' channel and a voltage-dependent outward rectifying K(+) channel in a phosphorylation-dependent manner. Homo- and heterodimerizes to form functional channels with distinct regulatory and gating properties. In trigeminal ganglia sensory neurons, the heterodimer of KCNK2/TREK-1 and KCNK18/TRESK inhibits neuronal firing and neurogenic inflammation by stabilizing the resting membrane potential at K(+) equilibrium potential as well as by regulating the threshold of action potentials and the spike frequency. At trigeminal A-beta afferent nerves, the heterodimer of KCNK2/TREK-1 and KCNK4/TRAAK is mostly coexpressed at nodes of Ranvier where it conducts voltage-independent mechanosensitive and thermosensitive currents, allowing rapid action potential repolarization, high speed and high frequence saltatory conduction on myelinated nerves to ensure prompt sensory responses. In hippocampal astrocytes, the heterodimer of KCNK2/TREK-1 and KCNK1/TWIK-1 allows passive K(+) conductance under basal conditions, but changes ion selectivity and becomes permeable to L-glutamate and Cl(-) ions upon binding to G-protein subunit GNG4 in stimulated astrocytes. Mediates rapid L-glutamate release in response to activation of G-protein-coupled receptors, such as F2R and CNR1. In hippocampal pyramidal neurons, the homodimer of KCNK2/TREK-1 contributes to gamma-aminobutyric acid (GABA) B-induced slow inhibitory postsynaptic potential. Associates with AKAP5 and Gs-protein-coupled receptor B2AR at postsynaptic dense bodies and converts to a leak channel no longer sensitive to stimulation by arachidonic acid, acidic pH or mechanical stress, nor inhibited by Gq-coupled receptors but still under the negative control of Gs-coupled receptors. Permeable to other monovalent cations such as Rb(+) and Cs(+). In terms of biological role, does not display channel activity but reduces the channel activity of isoform 1 and isoform 2 and reduces cell surface expression of isoform 2. The polypeptide is Potassium channel subfamily K member 2 (Homo sapiens (Human)).